A 79-amino-acid polypeptide reads, in one-letter code: D-alanyl carrier protein (79 aa).

In terms of domain architecture, Carrier spans 1–76; the sequence is MKEQIFDIIE…KIAARVQEKT (76 aa). Ser-34 carries the O-(pantetheine 4'-phosphoryl)serine modification.

This sequence belongs to the DltC family. Post-translationally, 4'-phosphopantetheine is transferred from CoA to a specific serine of apo-DCP.

The protein localises to the cytoplasm. It participates in cell wall biogenesis; lipoteichoic acid biosynthesis. Functionally, carrier protein involved in the D-alanylation of lipoteichoic acid (LTA). The loading of thioester-linked D-alanine onto DltC is catalyzed by D-alanine--D-alanyl carrier protein ligase DltA. The DltC-carried D-alanyl group is further transferred to cell membrane phosphatidylglycerol (PG) by forming an ester bond, probably catalyzed by DltD. D-alanylation of LTA plays an important role in modulating the properties of the cell wall in Gram-positive bacteria, influencing the net charge of the cell wall. The protein is D-alanyl carrier protein of Lactococcus lactis subsp. cremoris (strain SK11).